The primary structure comprises 413 residues: Serine hydroxymethyltransferase (413 aa).

(6S)-5,6,7,8-tetrahydrofolate-binding positions include L119 and 123 to 125; that span reads GHL. Residue K228 is modified to N6-(pyridoxal phosphate)lysine. Residue 351–353 coordinates (6S)-5,6,7,8-tetrahydrofolate; sequence SPF.

It belongs to the SHMT family. Homodimer. The cofactor is pyridoxal 5'-phosphate.

The protein resides in the cytoplasm. It carries out the reaction (6R)-5,10-methylene-5,6,7,8-tetrahydrofolate + glycine + H2O = (6S)-5,6,7,8-tetrahydrofolate + L-serine. The protein operates within one-carbon metabolism; tetrahydrofolate interconversion. It participates in amino-acid biosynthesis; glycine biosynthesis; glycine from L-serine: step 1/1. Functionally, catalyzes the reversible interconversion of serine and glycine with tetrahydrofolate (THF) serving as the one-carbon carrier. This reaction serves as the major source of one-carbon groups required for the biosynthesis of purines, thymidylate, methionine, and other important biomolecules. Also exhibits THF-independent aldolase activity toward beta-hydroxyamino acids, producing glycine and aldehydes, via a retro-aldol mechanism. The polypeptide is Serine hydroxymethyltransferase (Anoxybacillus flavithermus (strain DSM 21510 / WK1)).